The following is a 363-amino-acid chain: UDP-N-acetylglucosamine--N-acetylmuramyl-(pentapeptide) pyrophosphoryl-undecaprenol N-acetylglucosamine transferase (363 aa).

UDP-N-acetyl-alpha-D-glucosamine is bound by residues 14-16 (TGG), Arg-171, Ser-200, and Gln-290.

This sequence belongs to the glycosyltransferase 28 family. MurG subfamily.

It is found in the cell inner membrane. The enzyme catalyses di-trans,octa-cis-undecaprenyl diphospho-N-acetyl-alpha-D-muramoyl-L-alanyl-D-glutamyl-meso-2,6-diaminopimeloyl-D-alanyl-D-alanine + UDP-N-acetyl-alpha-D-glucosamine = di-trans,octa-cis-undecaprenyl diphospho-[N-acetyl-alpha-D-glucosaminyl-(1-&gt;4)]-N-acetyl-alpha-D-muramoyl-L-alanyl-D-glutamyl-meso-2,6-diaminopimeloyl-D-alanyl-D-alanine + UDP + H(+). Its pathway is cell wall biogenesis; peptidoglycan biosynthesis. In terms of biological role, cell wall formation. Catalyzes the transfer of a GlcNAc subunit on undecaprenyl-pyrophosphoryl-MurNAc-pentapeptide (lipid intermediate I) to form undecaprenyl-pyrophosphoryl-MurNAc-(pentapeptide)GlcNAc (lipid intermediate II). This is UDP-N-acetylglucosamine--N-acetylmuramyl-(pentapeptide) pyrophosphoryl-undecaprenol N-acetylglucosamine transferase from Borreliella afzelii (strain PKo) (Borrelia afzelii).